The chain runs to 260 residues: uncharacterized protein (260 aa).

The signal sequence occupies residues 1–22; the sequence is MKSIKRIGLCISLLILIIFATS. Cys-23 is lipidated: N-palmitoyl cysteine. Cys-23 is lipidated: S-diacylglycerol cysteine.

The protein belongs to the staphylococcal tandem lipoprotein family.

The protein localises to the cell membrane. This is an uncharacterized protein from Staphylococcus aureus (strain N315).